The following is a 206-amino-acid chain: Small ribosomal subunit protein uS4 (206 aa).

Residues 96–158 form the S4 RNA-binding domain; it reads SRLDNVVYRM…AKKQLRIQNA (63 aa).

This sequence belongs to the universal ribosomal protein uS4 family. In terms of assembly, part of the 30S ribosomal subunit. Contacts protein S5. The interaction surface between S4 and S5 is involved in control of translational fidelity.

Functionally, one of the primary rRNA binding proteins, it binds directly to 16S rRNA where it nucleates assembly of the body of the 30S subunit. In terms of biological role, with S5 and S12 plays an important role in translational accuracy. This is Small ribosomal subunit protein uS4 from Francisella tularensis subsp. holarctica (strain OSU18).